We begin with the raw amino-acid sequence, 112 residues long: uncharacterized protein (112 aa).

2 N-linked (GlcNAc...) asparagine; by host glycosylation sites follow: Asn-29 and Asn-60. A helical transmembrane segment spans residues 66–86 (IFNGLGFILIVIFIYLLLITL).

It belongs to the asfivirus B117L family.

The protein localises to the host membrane. It localises to the virion. This is an uncharacterized protein from Ornithodoros (relapsing fever ticks).